Here is a 478-residue protein sequence, read N- to C-terminus: Glutamate--tRNA ligase (478 aa).

The short motif at Pro-23–Asn-33 is the 'HIGH' region element. The segment covering Lys-130–Lys-145 has biased composition (basic and acidic residues). Positions Lys-130–Gly-153 are disordered. Positions Lys-255–Arg-259 match the 'KMSKS' region motif. Lys-258 contributes to the ATP binding site.

The protein belongs to the class-I aminoacyl-tRNA synthetase family. Glutamate--tRNA ligase type 1 subfamily. As to quaternary structure, monomer.

The protein resides in the cytoplasm. The enzyme catalyses tRNA(Glu) + L-glutamate + ATP = L-glutamyl-tRNA(Glu) + AMP + diphosphate. In terms of biological role, catalyzes the attachment of glutamate to tRNA(Glu) in a two-step reaction: glutamate is first activated by ATP to form Glu-AMP and then transferred to the acceptor end of tRNA(Glu). This chain is Glutamate--tRNA ligase, found in Paracidovorax citrulli (strain AAC00-1) (Acidovorax citrulli).